Consider the following 388-residue polypeptide: Chorismate synthase (388 aa).

Residues Arg-39 and Arg-45 each contribute to the NADP(+) site. A disordered region spans residues 95–118; that stretch reads EKNEKSRRVSRPRPGHADLVGGMK. FMN-binding positions include 130 to 132, 251 to 252, Gly-296, 311 to 315, and Arg-337; these read RSS, NA, and KPIPT.

Belongs to the chorismate synthase family. As to quaternary structure, homotetramer. The cofactor is FMNH2.

The catalysed reaction is 5-O-(1-carboxyvinyl)-3-phosphoshikimate = chorismate + phosphate. It participates in metabolic intermediate biosynthesis; chorismate biosynthesis; chorismate from D-erythrose 4-phosphate and phosphoenolpyruvate: step 7/7. Its function is as follows. Catalyzes the anti-1,4-elimination of the C-3 phosphate and the C-6 proR hydrogen from 5-enolpyruvylshikimate-3-phosphate (EPSP) to yield chorismate, which is the branch point compound that serves as the starting substrate for the three terminal pathways of aromatic amino acid biosynthesis. This reaction introduces a second double bond into the aromatic ring system. This Listeria monocytogenes serotype 4b (strain F2365) protein is Chorismate synthase.